We begin with the raw amino-acid sequence, 127 residues long: Oleate-induced peroxisomal protein POX18 (127 aa).

Residues 14–119 (FKELHEGLAD…KATAIESVFK (106 aa)) form the SCP2 domain. Positions 33–41 (AVNAVIVIT) are hydrophobic. The segment at 43 to 52 (KNKEGKEQSW) is hydrophilic.

As to quaternary structure, monomer.

Its subcellular location is the peroxisome. The protein operates within lipid metabolism; fatty acid metabolism. Functionally, is involved in beta-oxidation of long-chain fatty acids. Its exact function is unknown, but possesses a nonspecific lipid-transfer activity, despite the absence of a cysteine residue thought to be essential for the activity of its mammalian counterparts. The sequence is that of Oleate-induced peroxisomal protein POX18 (POX18) from Candida maltosa (Yeast).